A 102-amino-acid chain; its full sequence is ATP-dependent Clp protease adapter protein ClpS (102 aa).

This sequence belongs to the ClpS family. As to quaternary structure, binds to the N-terminal domain of the chaperone ClpA.

Its function is as follows. Involved in the modulation of the specificity of the ClpAP-mediated ATP-dependent protein degradation. This is ATP-dependent Clp protease adapter protein ClpS from Shewanella frigidimarina (strain NCIMB 400).